A 202-amino-acid chain; its full sequence is Peptidyl-tRNA hydrolase (202 aa).

Tyr-22 contacts tRNA. The active-site Proton acceptor is His-27. Phe-69, Asn-71, and Asn-117 together coordinate tRNA.

The protein belongs to the PTH family. In terms of assembly, monomer.

It localises to the cytoplasm. The catalysed reaction is an N-acyl-L-alpha-aminoacyl-tRNA + H2O = an N-acyl-L-amino acid + a tRNA + H(+). In terms of biological role, hydrolyzes ribosome-free peptidyl-tRNAs (with 1 or more amino acids incorporated), which drop off the ribosome during protein synthesis, or as a result of ribosome stalling. Functionally, catalyzes the release of premature peptidyl moieties from peptidyl-tRNA molecules trapped in stalled 50S ribosomal subunits, and thus maintains levels of free tRNAs and 50S ribosomes. This is Peptidyl-tRNA hydrolase from Thiobacillus denitrificans (strain ATCC 25259 / T1).